Reading from the N-terminus, the 4545-residue chain is Prolow-density lipoprotein receptor-related protein 1 (4545 aa).

Residues 1–19 (MLTPPLLLLLPLLSALVSG) form the signal peptide. Residues 20–4424 (ATMDAPKTCS…SQQQPGHMAS (4405 aa)) are Extracellular-facing. 2 consecutive LDL-receptor class A domains span residues 26–67 (KTCS…ICPQ) and 71–111 (QRCP…HCRE). Disulfide bonds link C28/C41, C35/C54, C48/C65, C73/C86, C80/C99, and C93/C109. Residues 112 to 150 (LRANCSRMGCQHHCVPTPSGPTCYCNSSFQLQADGKTCK) enclose the EGF-like 1 domain. N115 is a glycosylation site (N-linked (GlcNAc...) asparagine). 6 disulfides stabilise this stretch: C116-C125, C121-C134, C136-C149, C155-C165, C161-C174, and C176-C189. A glycan (N-linked (GlcNAc...) asparagine) is linked at N137. Residues 151-190 (DFDECSVYGTCSQLCTNTDGSFTCGCVEGYLLQPDNRSCK) form the EGF-like 2; calcium-binding domain. N186, N240, and N275 each carry an N-linked (GlcNAc...) asparagine glycan. LDL-receptor class B repeat units lie at residues 293–335 (GNFY…DPAM), 336–379 (GKVF…DLVS), and 380–423 (RLVY…FENY). N358 carries an N-linked (GlcNAc...) asparagine glycan. The N-linked (GlcNAc...) asparagine glycan is linked to N447. The 47-residue stretch at 475-521 (RSHACENDQYGKPGGCSDICLLANSHKARTCRCRSGFSLGSDGKSCK) folds into the EGF-like 3 domain. Intrachain disulfides connect C479/C494, C490/C505, and C507/C520. LDL-receptor class B repeat units follow at residues 572 to 614 (GFIY…DWMG), 615 to 660 (DNLY…DPLN), 661 to 711 (GWMY…DIPA), and 712 to 755 (GRLY…HGNY). A glycan (N-linked (GlcNAc...) asparagine) is linked at N730. The 41-residue stretch at 804-844 (GTNKCRVNNGGCSSLCLATPGSRQCACAEDQVLDTDGVTCL) folds into the EGF-like 4 domain. 33 disulfide bridges follow: C808–C819, C815–C828, C830–C843, C855–C867, C862–C880, C874–C891, C896–C908, C903–C921, C915–C932, C937–C949, C944–C962, C956–C972, C977–C990, C985–C1003, C997–C1012, C1016–C1028, C1023–C1041, C1035–C1052, C1063–C1076, C1070–C1089, C1083–C1098, C1105–C1119, C1113–C1132, C1126–C1141, C1146–C1160, C1153–C1173, C1167–C1183, C1186–C1197, C1193–C1207, C1209–C1222, C1228–C1238, C1234–C1247, and C1249–C1262. 8 consecutive LDL-receptor class A domains span residues 853 to 893 (PQCQ…LCHQ), 894 to 934 (HTCP…TCSA), 935 to 974 (RTCPPNQFSCASGRCIPISWTCDLDDDCGDRSDESASCAY), 975 to 1014 (PTCFPLTQFTCNNGRCININWRCDNDNDCGDNSDEAGCSH), 1014 to 1054 (HSCS…NCTN), 1061 to 1100 (GGCHSDEFQCRLDGLCIPLRWRCDGDTDCMDSSDEKSCEG), 1103 to 1143 (HVCD…NCEA), and 1144 to 1183 (LACRPPSHPCANNTSVCLPPDKLCDGKDDCGDGSDEGELC). 6 residues coordinate Ca(2+): W872, D875, D877, D879, D885, and E886. An N-linked (GlcNAc...) asparagine glycan is attached at N929. Ca(2+)-binding residues include W1033, D1036, D1038, D1040, D1046, and E1047. An N-linked (GlcNAc...) asparagine glycan is attached at N1051. Positions 1081, 1084, 1086, 1088, 1094, and 1095 each coordinate Ca(2+). 2 N-linked (GlcNAc...) asparagine glycosylation sites follow: N1155 and N1156. 2 EGF-like domains span residues 1184-1223 (DQCSLNNGGCSHNCSVAPGEGIVCSCPLGMELGSDNHTCQ) and 1224-1263 (IQSYCAKHLKCSQKCDQNKFSVKCSCYEGWVLEPDGESCR). N-linked (GlcNAc...) asparagine glycosylation is found at N1196 and N1219. LDL-receptor class B repeat units lie at residues 1310–1356 (SALY…DWIA), 1357–1399 (GNIY…DPRD), 1400–1446 (GILF…DYLE), 1447–1491 (KRIL…YGGE), and 1492–1532 (VYWT…YHPS). N1512 carries N-linked (GlcNAc...) asparagine glycosylation. An EGF-like 7 domain is found at 1537-1580 (APNPCEANGGRGPCSHLCLINYNRTVSCACPHLMKLHKDNTTCY). Cystine bridges form between C1541/C1554, C1550/C1564, and C1566/C1579. 4 N-linked (GlcNAc...) asparagine glycosylation sites follow: N1559, N1576, N1617, and N1646. LDL-receptor class B repeat units lie at residues 1628 to 1670 (QRVY…DWVS), 1671 to 1714 (RNLF…HPLR), 1715 to 1754 (GKLYWTDGDNISMANMDGSNHTLLFSGQKGPVGLAIDFPE), and 1755 to 1799 (SKLY…MGDK). Residues N1724, N1734, N1764, and N1826 are each glycosylated (N-linked (GlcNAc...) asparagine). The EGF-like 8 domain maps to 1847-1888 (GTNPCSVNNGDCSQLCLPTSETTRSCMCTAGYSLRSGQQACE). Intrachain disulfides connect C1851/C1862, C1858/C1872, and C1874/C1887. Residue N1934 is glycosylated (N-linked (GlcNAc...) asparagine). LDL-receptor class B repeat units lie at residues 1935–1977 (DTIY…DWIA), 1978–2020 (GNIY…HPEK), 2021–2064 (GYLF…DYQG), and 2065–2108 (GKLY…FEDF). N1996 is a glycosylation site (N-linked (GlcNAc...) asparagine). Position 2010 is an N6-acetyllysine (K2010). An N-linked (GlcNAc...) asparagine glycan is attached at N2049. 2 N-linked (GlcNAc...) asparagine glycosylation sites follow: N2118 and N2128. An EGF-like 9 domain is found at 2156–2196 (GTNVCAVANGGCQQLCLYRGGGQRACACAHGMLAEDGASCR). Cystine bridges form between C2160-C2171, C2167-C2181, and C2183-C2195. 5 LDL-receptor class B repeats span residues 2254 to 2295 (NRIF…HRGW), 2296 to 2344 (DTLY…DECQ), 2345 to 2389 (NLMF…DHRA), 2390 to 2432 (EKLY…YGEH), and 2433 to 2474 (IFWT…VAND). An N-linked (GlcNAc...) asparagine glycan is attached at N2473. Residues 2479-2519 (ELSPCRINNGGCQDLCLLTHQGHVNCSCRGGRILQEDFTCR) enclose the EGF-like 10 domain. 3 cysteine pairs are disulfide-bonded: C2483-C2494, C2490-C2504, and C2506-C2518. A glycan (N-linked (GlcNAc...) asparagine) is linked at N2503. The N-linked (GlcNAc...) asparagine glycan is linked to N2522. LDL-receptor class A domains follow at residues 2523–2564 (SSCR…YCNS), 2565–2603 (RRCKKTFRQCNNGRCVSNMLWCNGVDDCGDGSDEIPCNK), 2604–2642 (TACGVGEFRCRDGSCIGNSSRCNQFVDCEDASDEMNCSA), 2643–2691 (TDCS…DCPG), 2695–2733 (PRCPLNYFACPSGRCIPMSWTCDKEDDCENGEDETHCNK), 2733–2772 (KFCSEAQFECQNHRCISKQWLCDGSDDCGDGSDEAAHCEG), and 2773–2815 (KTCG…GCLY). Cystine bridges form between C2525/C2538, C2533/C2551, C2545/C2562, C2567/C2579, C2574/C2592, and C2586/C2601. An N-linked (GlcNAc...) asparagine glycan is attached at N2602. Cystine bridges form between C2606-C2618, C2613-C2631, C2625-C2640, C2645-C2667, C2661-C2680, C2674-C2689, C2697-C2709, C2704-C2722, C2716-C2731, C2735-C2747, C2742-C2760, C2754-C2770, C2775-C2788, C2782-C2801, and C2795-C2813. N-linked (GlcNAc...) asparagine glycans are attached at residues N2621 and N2639. The N-linked (GlcNAc...) asparagine glycan is linked to N2816. 3 LDL-receptor class A domains span residues 2817–2856 (STCDDREFMCQNRLCIPKHFVCDHDRDCADGSDESPECEY), 2857–2900 (PTCG…HCTS), and 2903–2941 (HKCNASSQFLCSSGRCVAEALLCNGQDDCGDGSDERGCH). Disulfide bonds link C2819–C2831, C2826–C2844, C2838–C2854, C2859–C2871, C2866–C2885, C2879–C2898, C2905–C2918, C2913–C2931, C2925–C2940, C2945–C2957, C2953–C2966, C2968–C2981, C2987–C2997, C2993–C3006, and C3008–C3022. A glycan (N-linked (GlcNAc...) asparagine) is linked at N2906. One can recognise an EGF-like 11 domain in the interval 2942 to 2982 (VNECLSRKLSGCSQDCEDLKIGFKCRCRPGFRLKDDGRTCA). One can recognise an EGF-like 12; calcium-binding domain in the interval 2983–3023 (DLDECSTTFPCSQLCINTHGSYKCLCVEGYAPRGGDPHSCK). N-linked (GlcNAc...) asparagine glycans are attached at residues N3049 and N3090. 5 LDL-receptor class B repeats span residues 3070–3114 (QMIY…DWVG), 3115–3157 (GNLY…DVQN), 3158–3201 (GYLY…DYVT), 3202–3244 (ERIY…FEDY), and 3245–3285 (VYWT…FHAL). N3265 carries an N-linked (GlcNAc...) asparagine glycan. In terms of domain architecture, EGF-like 13 spans 3291 to 3332 (PNHPCKVNNGGCSNLCLLSPGGGHKCACPTNFYLGGDGRTCV). Cystine bridges form between C3295-C3306, C3302-C3316, and C3318-C3331. LDL-receptor class A domains follow at residues 3333 to 3372 (SNCTASQFVCKNDKCIPFWWKCDTEDDCGDHSDEPPDCPE), 3373 to 3411 (FKCRPGQFQCSTGICTNPAFICDGDNDCQDNSDEANCDI), 3412 to 3451 (HVCLPSQFKCTNTNRCIPGIFRCNGQDNCGDGEDERDCPE), 3452 to 3492 (VTCA…NCTQ), 3493 to 3534 (MTCG…ECDE), 3535 to 3573 (RTCEPYQFRCKNNRCVPGRWQCDYDNDCGDNSDEESCTP), 3574 to 3612 (RPCSESEFSCANGRCIAGRWKCDGDHDCADGSDEKDCTP), 3612 to 3650 (PRCDMDQFQCKSGHCIPLRWRCDADADCMDGSDEEACGT), 3653 to 3693 (RTCP…ECAR), 3694 to 3734 (FICP…DCEP), and 3740 to 3779 (PHCKDKKEFLCRNQRCLSSSLRCNMFDDCGDGSDEEDCSI). N-linked (GlcNAc...) asparagine glycosylation is present at N3334. 39 disulfides stabilise this stretch: C3335–C3347, C3342–C3360, C3354–C3370, C3375–C3387, C3382–C3400, C3394–C3409, C3414–C3427, C3421–C3440, C3434–C3449, C3454–C3467, C3461–C3480, C3474–C3490, C3495–C3508, C3502–C3521, C3515–C3532, C3537–C3549, C3544–C3562, C3556–C3571, C3576–C3588, C3583–C3601, C3595–C3610, C3614–C3626, C3621–C3639, C3633–C3648, C3655–C3667, C3662–C3680, C3674–C3691, C3696–C3710, C3704–C3723, C3717–C3732, C3742–C3755, C3750–C3768, C3762–C3777, C3786–C3799, C3793–C3808, C3810–C3823, C3829–C3839, C3835–C3848, and C3850–C3861. An N-linked (GlcNAc...) asparagine glycan is attached at N3489. A glycan (N-linked (GlcNAc...) asparagine) is linked at N3663. EGF-like domains follow at residues 3782–3824 (KLTS…PGCQ) and 3825–3862 (DINECLRFGTCSQLCNNTKGGHLCSCARNFMKTHNTCK). N-linked (GlcNAc...) asparagine glycosylation occurs at N3789. An N-linked (GlcNAc...) asparagine glycan is attached at N3840. LDL-receptor class B repeat units follow at residues 3913 to 3955 (GRVY…HLNI), 3971 to 4013 (GNVY…DPLR), 4014 to 4057 (GTMY…DYHN), and 4058 to 4102 (ERLY…FEDY). The Recognition site for proteolytical processing motif lies at 3941-3944 (RHRR). N-linked (GlcNAc...) asparagine glycosylation occurs at N3954. N-linked (GlcNAc...) asparagine glycosylation is found at N4076 and N4126. 7 EGF-like domains span residues 4148–4184 (VTNPCDRKKCEWLCLLSPSGPVCTCPNGKRLDNGTCV), 4197–4233 (RPGTCTLQCFNGGSCFLNARRQPKCRCQPRYTGDKCE), 4233–4269 (ELDQCWEYCHNGGTCAASPSGMPTCRCPTGFTGPKCT), 4269–4305 (TAQVCAGYCSNNSTCTVNQGNQPQCRCLPGFLGDRCQ), 4305–4341 (QYRQCSGFCENFGTCQMAADGSRQCRCTVYFEGPRCE), 4341–4376 (EVNKCSRCLQGACVVNKQTGDVTCNCTDGRVAPSCL), and 4374–4410 (SCLTCIDHCSNGGSCTMNSKMMPECQCPPHMTGPRCE). Disulfide bonds link C4152/C4161, C4157/C4170, C4172/C4183, C4201/C4211, C4205/C4221, C4223/C4232, C4237/C4247, C4241/C4257, C4259/C4268, C4273/C4283, C4277/C4293, C4295/C4304, C4309/C4319, C4313/C4329, C4331/C4340, C4345/C4353, and C4348/C4364. N4180 carries N-linked (GlcNAc...) asparagine glycosylation. N-linked (GlcNAc...) asparagine glycans are attached at residues N4279 and N4280. N-linked (GlcNAc...) asparagine glycosylation is present at N4365. 4 cysteine pairs are disulfide-bonded: C4366–C4375, C4378–C4388, C4382–C4398, and C4400–C4409. Residues 4425–4445 (ILIPLLLLLLLLLVAGVVFWY) traverse the membrane as a helical segment. The Cytoplasmic segment spans residues 4446-4545 (KRRVRGAKGF…PEDEIGDPLA (100 aa)). Positions 4446–4545 (KRRVRGAKGF…PEDEIGDPLA (100 aa)) are interaction with MAFB. T4461 carries the post-translational modification Phosphothreonine. The short motif at 4503 to 4508 (FTNPVY) is the NPXY motif element. Y4508 is modified (phosphotyrosine). Phosphoserine is present on residues S4518, S4521, and S4524.

It belongs to the LDLR family. As to quaternary structure, heterodimer of an 85-kDa membrane-bound carboxyl subunit and a non-covalently attached 515-kDa N-terminal subunit. Intracellular domain interacts with MAFB. Found in a complex with PID1/PCLI1, LRP1 and CUBNI. Interacts with SNX17, PID1/PCLI1, PDGF and CUBN. The intracellular domain interacts with SHC1, GULP1 and DAB1. Can weakly interact (via NPXY motif) with DAB2 (via PID domain); the interaction is enhanced by tyrosine phosphorylation of the NPXY motif. Interacts with MDK; promotes neuronal survival. Interacts with LRPAP1; this interaction is followed by rapid internalization. Interacts with uPA/PLAU and PAI1/SERPINE1, either individually or in complex with each other, leading to rapid endocytosis; this interaction is abolished in the presence of LRPAP1/RAP. Also interacts with tPA/PLAT alone or in complex with SERPINE1. Interacts with the urokinase receptor PLAUR; this interaction leads to PLAUR internalization and is impaired in the presence of SORL1. Interacts with PDGFB. Interacts with TAU/MAPT, leading to endocytosis; this interaction is reduced in the presence of LRPAP1/RAP. Interacts with IGFBP3. Interacts with ADGRG6. In terms of processing, phosphorylated on serine and threonine residues. Post-translationally, phosphorylated on tyrosine residues upon stimulation with PDGF. Tyrosine phosphorylation promotes interaction with SHC1. Cleaved into a 85 kDa membrane-spanning subunit (LRP-85) and a 515 kDa large extracellular domain (LRP-515) that remains non-covalently associated. Gamma-secretase-dependent cleavage of LRP-85 releases the intracellular domain from the membrane.

Its subcellular location is the cell membrane. It localises to the membrane. The protein localises to the coated pit. The protein resides in the golgi outpost. It is found in the cytoplasm. Its subcellular location is the cytoskeleton. It localises to the microtubule organizing center. The protein localises to the nucleus. Its function is as follows. Endocytic receptor involved in endocytosis and in phagocytosis of apoptotic cells. Required for early embryonic development. Involved in cellular lipid homeostasis. Involved in the plasma clearance of chylomicron remnants and activated LRPAP1 (alpha 2-macroglobulin), as well as the local metabolism of complexes between plasminogen activators and their endogenous inhibitors. Acts as an alpha-2-macroglobulin receptor. Acts as a TAU/MAPT receptor and controls the endocytosis of TAU/MAPT as well as its subsequent spread. May modulate cellular events, such as APP metabolism, kinase-dependent intracellular signaling, neuronal calcium signaling as well as neurotransmission. Also acts as a receptor for IGFBP3 to mediate cell growth inhibition. In terms of biological role, (Microbial infection) Functions as a receptor for Vibrio cholerae cholix toxin and for Pseudomonas aeruginosa exotoxin A. The protein is Prolow-density lipoprotein receptor-related protein 1 of Mus musculus (Mouse).